The following is a 377-amino-acid chain: Protein-glutamate methylesterase/protein-glutamine glutaminase 1 (377 aa).

The region spanning 4–121 (KVLVVDDSSF…ARNRDEAVTL (118 aa)) is the Response regulatory domain. A 4-aspartylphosphate modification is found at Asp-55. The disordered stretch occupies residues 138-170 (RPAAPRPAPTTSIAASSSLSQERAAATSPLGNR). A compositionally biased stretch (low complexity) spans 146–157 (PTTSIAASSSLS). Positions 184 to 377 (SGKKYQLTAI…ERMLVEVGLA (194 aa)) constitute a CheB-type methylesterase domain. Active-site residues include Ser-196, His-223, and Asp-319.

It belongs to the CheB family. Phosphorylated by CheA. Phosphorylation of the N-terminal regulatory domain activates the methylesterase activity.

It localises to the cytoplasm. The enzyme catalyses [protein]-L-glutamate 5-O-methyl ester + H2O = L-glutamyl-[protein] + methanol + H(+). The catalysed reaction is L-glutaminyl-[protein] + H2O = L-glutamyl-[protein] + NH4(+). Involved in chemotaxis. Part of a chemotaxis signal transduction system that modulates chemotaxis in response to various stimuli. Catalyzes the demethylation of specific methylglutamate residues introduced into the chemoreceptors (methyl-accepting chemotaxis proteins or MCP) by CheR. Also mediates the irreversible deamidation of specific glutamine residues to glutamic acid. The protein is Protein-glutamate methylesterase/protein-glutamine glutaminase 1 of Vibrio cholerae serotype O1 (strain ATCC 39315 / El Tor Inaba N16961).